Consider the following 275-residue polypeptide: Large ribosomal subunit protein uL2 (275 aa).

A disordered region spans residues 222-275; sequence GKVMNPVDHPHGGGEGRNPIGRNPSTPWGKLAMGVKTRGNKKSDRLIVKRRNKK.

Belongs to the universal ribosomal protein uL2 family. Part of the 50S ribosomal subunit. Forms a bridge to the 30S subunit in the 70S ribosome.

Functionally, one of the primary rRNA binding proteins. Required for association of the 30S and 50S subunits to form the 70S ribosome, for tRNA binding and peptide bond formation. It has been suggested to have peptidyltransferase activity; this is somewhat controversial. Makes several contacts with the 16S rRNA in the 70S ribosome. This is Large ribosomal subunit protein uL2 from Desulforamulus reducens (strain ATCC BAA-1160 / DSM 100696 / MI-1) (Desulfotomaculum reducens).